Here is a 509-residue protein sequence, read N- to C-terminus: Maturase K (509 aa).

It belongs to the intron maturase 2 family. MatK subfamily.

The protein resides in the plastid. It localises to the chloroplast. In terms of biological role, usually encoded in the trnK tRNA gene intron. Probably assists in splicing its own and other chloroplast group II introns. The polypeptide is Maturase K (Solanum bulbocastanum (Wild potato)).